Consider the following 54-residue polypeptide: Rubredoxin (54 aa).

In terms of domain architecture, Rubredoxin-like spans 2 to 52 (AKWVCKICGYIYDEDAGDPDNGISPGTKFEELPDDWVCPICGAPKSEFEKL). Cysteine 6, cysteine 9, cysteine 39, and cysteine 42 together coordinate Fe cation.

Belongs to the rubredoxin family. The cofactor is Fe(3+).

Its function is as follows. Rubredoxin is a small nonheme, iron protein lacking acid-labile sulfide. Its single Fe, chelated to 4 Cys, functions as an electron acceptor and may also stabilize the conformation of the molecule. In Pyrococcus furiosus (strain ATCC 43587 / DSM 3638 / JCM 8422 / Vc1), this protein is Rubredoxin (rub).